Reading from the N-terminus, the 75-residue chain is Exodeoxyribonuclease 7 small subunit (75 aa).

This sequence belongs to the XseB family. As to quaternary structure, heterooligomer composed of large and small subunits.

Its subcellular location is the cytoplasm. It carries out the reaction Exonucleolytic cleavage in either 5'- to 3'- or 3'- to 5'-direction to yield nucleoside 5'-phosphates.. Its function is as follows. Bidirectionally degrades single-stranded DNA into large acid-insoluble oligonucleotides, which are then degraded further into small acid-soluble oligonucleotides. The polypeptide is Exodeoxyribonuclease 7 small subunit (Caldanaerobacter subterraneus subsp. tengcongensis (strain DSM 15242 / JCM 11007 / NBRC 100824 / MB4) (Thermoanaerobacter tengcongensis)).